A 133-amino-acid polypeptide reads, in one-letter code: Small ribosomal subunit protein uS8 (133 aa).

Belongs to the universal ribosomal protein uS8 family. Part of the 30S ribosomal subunit. Contacts proteins S5 and S12.

One of the primary rRNA binding proteins, it binds directly to 16S rRNA central domain where it helps coordinate assembly of the platform of the 30S subunit. In Leptospira borgpetersenii serovar Hardjo-bovis (strain JB197), this protein is Small ribosomal subunit protein uS8.